We begin with the raw amino-acid sequence, 268 residues long: uncharacterized protein (268 aa).

The N-terminal stretch at 1–18 (MRGFLLLSLGVFSFSALA) is a signal peptide. Domain stretches follow at residues 24–184 (SHDL…ELLP) and 185–268 (SPAT…NWLR). Residues C110 and C115 are joined by a disulfide bond.

In terms of assembly, monomer.

It localises to the periplasm. This is an uncharacterized protein from Pseudomonas aeruginosa (strain ATCC 15692 / DSM 22644 / CIP 104116 / JCM 14847 / LMG 12228 / 1C / PRS 101 / PAO1).